The following is a 226-amino-acid chain: uncharacterized protein (226 aa).

The 92-residue stretch at 1 to 92 folds into the HTH arsR-type domain; that stretch reads MNPNIAKISS…QLLHIAPKAK (92 aa). A DNA-binding region (H-T-H motif) is located at residues 32–55; that stretch reads AGELAYLANIKPQTASFHLNKLLE.

This is an uncharacterized protein from Bacillus subtilis (strain 168).